The following is a 396-amino-acid chain: Lipid-A-disaccharide synthase (396 aa).

The protein belongs to the LpxB family.

It carries out the reaction a lipid X + a UDP-2-N,3-O-bis[(3R)-3-hydroxyacyl]-alpha-D-glucosamine = a lipid A disaccharide + UDP + H(+). Its pathway is bacterial outer membrane biogenesis; LPS lipid A biosynthesis. In terms of biological role, condensation of UDP-2,3-diacylglucosamine and 2,3-diacylglucosamine-1-phosphate to form lipid A disaccharide, a precursor of lipid A, a phosphorylated glycolipid that anchors the lipopolysaccharide to the outer membrane of the cell. This chain is Lipid-A-disaccharide synthase, found in Acinetobacter baylyi (strain ATCC 33305 / BD413 / ADP1).